A 143-amino-acid polypeptide reads, in one-letter code: Putative 2'-deoxynucleoside 5'-phosphate N-hydrolase 1 (143 aa).

Residues His-37, Glu-82, and 106–108 (SAM) contribute to the substrate site.

The protein belongs to the 2'-deoxynucleoside 5'-phosphate N-hydrolase 1 family. In terms of assembly, monomer and homodimer.

It catalyses the reaction a pyrimidine 2'-deoxyribonucleoside 5'-phosphate + H2O = a pyrimidine nucleobase + 2-deoxy-D-ribose 5-phosphate. It carries out the reaction a purine 2'-deoxyribonucleoside 5'-phosphate + H2O = a purine nucleobase + 2-deoxy-D-ribose 5-phosphate. Functionally, catalyzes the cleavage of the N-glycosidic bond of deoxyribonucleoside 5'-monophosphates to yield deoxyribose 5-phosphate and a purine or pyrimidine base. This Thermofilum pendens (strain DSM 2475 / Hrk 5) protein is Putative 2'-deoxynucleoside 5'-phosphate N-hydrolase 1.